The primary structure comprises 587 residues: tRNA (guanine(37)-N(1))-methyltransferase 2 (587 aa).

Residues arginine 360 and 430–431 contribute to the S-adenosyl-L-methionine site; that span reads DA. A disordered region spans residues 446 to 469; the sequence is ASTRSRKEDVTNKDGNHVTPTEPM. Basic and acidic residues predominate over residues 450–461; it reads SRKEDVTNKDGN. Asparagine 478 is an S-adenosyl-L-methionine binding site.

This sequence belongs to the class I-like SAM-binding methyltransferase superfamily. TRM5/TYW2 family. In terms of assembly, monomer.

The protein localises to the mitochondrion matrix. It localises to the nucleus. Its subcellular location is the cytoplasm. It carries out the reaction guanosine(37) in tRNA + S-adenosyl-L-methionine = N(1)-methylguanosine(37) in tRNA + S-adenosyl-L-homocysteine + H(+). In terms of biological role, specifically methylates the N1 position of guanosine-37 in various cytoplasmic and mitochondrial tRNAs. Methylation is not dependent on the nature of the nucleoside 5' of the target nucleoside. This is the first step in the biosynthesis of wybutosine (yW), a modified base adjacent to the anticodon of tRNAs and required for accurate decoding. This Phaeodactylum tricornutum (strain CCAP 1055/1) protein is tRNA (guanine(37)-N(1))-methyltransferase 2.